A 372-amino-acid polypeptide reads, in one-letter code: MSIQVQHVTKRFGNFVALDDVSLAFRQGELTALLGPSGCGKTTLLRIIAGLEHADAGTILLNGEDASDRHVRERQVGFVFQHYALFKHMTVFENVAFGLRVKPRAQRPSEAQIRAKVKALLELVQLDWLAERYPPQLSGGQRQRIALARALAVEPRVLLLDEPFGALDAKVRKELRRWLRRLHDDLHVTSLFVTHDQEEALEVADSVVLMNRGQVEQVGSPDAVYNTPATPFVYGFLGNVNLFHGRLEAGEGGSVLHVGETALSVPPGGVDASRADQAVAFVRPHEIDLERYAPGAEGIPVTLRRALTLGAVAQLELERTDSDDIIEVSLPIERFRAQGLREGETLVVRPRAIRVFAQGQGSEHAAAAQAAA.

The 235-residue stretch at 3–237 (IQVQHVTKRF…PATPFVYGFL (235 aa)) folds into the ABC transporter domain. 35-42 (GPSGCGKT) provides a ligand contact to ATP.

This sequence belongs to the ABC transporter superfamily. Sulfate/tungstate importer (TC 3.A.1.6) family. In terms of assembly, the complex is composed of two ATP-binding proteins (CysA), two transmembrane proteins (CysT and CysW) and a solute-binding protein (CysP).

It localises to the cell inner membrane. The catalysed reaction is sulfate(out) + ATP + H2O = sulfate(in) + ADP + phosphate + H(+). It carries out the reaction thiosulfate(out) + ATP + H2O = thiosulfate(in) + ADP + phosphate + H(+). Its function is as follows. Part of the ABC transporter complex CysAWTP involved in sulfate/thiosulfate import. Responsible for energy coupling to the transport system. The polypeptide is Sulfate/thiosulfate import ATP-binding protein CysA (Ralstonia nicotianae (strain ATCC BAA-1114 / GMI1000) (Ralstonia solanacearum)).